The chain runs to 109 residues: Nucleoid-associated protein Bcer98_0019 (109 aa).

The protein belongs to the YbaB/EbfC family. In terms of assembly, homodimer.

It is found in the cytoplasm. Its subcellular location is the nucleoid. Functionally, binds to DNA and alters its conformation. May be involved in regulation of gene expression, nucleoid organization and DNA protection. This Bacillus cytotoxicus (strain DSM 22905 / CIP 110041 / 391-98 / NVH 391-98) protein is Nucleoid-associated protein Bcer98_0019.